Consider the following 80-residue polypeptide: MSPFAHLLALPVRAYRLVASPWVGHGCRFQPTCSAYALEALERHGAAKGGWLAARRVCRCHPWGGHGFDPVPGSEAPRQD.

It belongs to the UPF0161 family.

The protein localises to the cell inner membrane. Could be involved in insertion of integral membrane proteins into the membrane. This chain is Putative membrane protein insertion efficiency factor, found in Paracoccus denitrificans (strain Pd 1222).